The primary structure comprises 730 residues: 1,4-alpha-glucan branching enzyme GlgB (730 aa).

Aspartate 405 serves as the catalytic Nucleophile. Catalysis depends on glutamate 458, which acts as the Proton donor.

It belongs to the glycosyl hydrolase 13 family. GlgB subfamily. In terms of assembly, monomer.

It catalyses the reaction Transfers a segment of a (1-&gt;4)-alpha-D-glucan chain to a primary hydroxy group in a similar glucan chain.. It participates in glycan biosynthesis; glycogen biosynthesis. In terms of biological role, catalyzes the formation of the alpha-1,6-glucosidic linkages in glycogen by scission of a 1,4-alpha-linked oligosaccharide from growing alpha-1,4-glucan chains and the subsequent attachment of the oligosaccharide to the alpha-1,6 position. This chain is 1,4-alpha-glucan branching enzyme GlgB, found in Haemophilus influenzae (strain 86-028NP).